A 660-amino-acid chain; its full sequence is Solute carrier family 5 member 4 (660 aa).

The Cytoplasmic segment spans residues 1–28 (MASTLSPSTVTKTPGPPEISERIQNAAD). The chain crosses the membrane as a helical span at residues 29–47 (ISVIVIYFVVVMAVGLWAM). The Extracellular segment spans residues 48–64 (LRTNRGTVGGFFLAGRD). The helical transmembrane segment at 65 to 85 (VTWWPMGASLFASNIGSGHFV) threads the bilayer. Residues 86-105 (GLAGTGAASGIAIAAFEWNA) lie on the Cytoplasmic side of the membrane. The chain crosses the membrane as a helical span at residues 106–126 (LLLLLVLGWFFVPIYIKAGVM). Topologically, residues 127–171 (TMPEYLRKRFGGKRLQIYLSILSLFICVALRISSDIFSGAIFIKL) are extracellular. Residues 172 to 191 (ALGLDLYLAIFSLLAITAIY) form a helical membrane-spanning segment. The Cytoplasmic portion of the chain corresponds to 192-208 (TITGGLASVIYTDTLQT). The helical transmembrane segment at 209 to 229 (IIMLIGSFILMGFAFVEVGGY) threads the bilayer. At 230 to 270 (ESFTEKYMNAIPTIVEGDNLTISPKCYTPQGDSFHIFRDAV) the chain is on the extracellular side. An N-linked (GlcNAc...) asparagine glycan is attached at asparagine 248. A helical membrane pass occupies residues 271–291 (TGDIPWPGMIFGMTVVAAWYW). Residues 292 to 314 (CTDQVIVQRCLSGKDMSHVKAAC) are Cytoplasmic-facing. A helical transmembrane segment spans residues 315–334 (IMCGYLKLLPMFLMVMPGMI). Over 335-423 (SRILYTEKVA…RKQASEKELL (89 aa)) the chain is Extracellular. A helical transmembrane segment spans residues 424–443 (IAGRLFIILLIVISIVWVPL). Residues 444-455 (VQVAQNGQLFHY) are Cytoplasmic-facing. A helical transmembrane segment spans residues 456–476 (IESISSYLGPPIAAVFLLAIF). At 477–526 (CKRVNEQGAFWGLIIGFVMGLIRMIAEFVYGTGSCLAASNCPQIICGVHY) the chain is on the extracellular side. The chain crosses the membrane as a helical span at residues 527–547 (LYFALILFFVSILVVLAISLL). At 548–638 (TKPIPDVHLY…TDTSEKPLWK (91 aa)) the chain is on the cytoplasmic side. The helical transmembrane segment at 639 to 659 (TIVNINAILLLAVAVFVHGYF) threads the bilayer.

The protein belongs to the sodium:solute symporter (SSF) (TC 2.A.21) family. Kidney, intestine, liver, skeletal muscle and spleen.

Its subcellular location is the cell membrane. The enzyme catalyses D-glucose(out) + 2 Na(+)(out) = D-glucose(in) + 2 Na(+)(in). Its activity is regulated as follows. Inhibited by phlorizin. Low-affinity sodium/D-glucose symporter with a great selectivity for sugars (D-glucose &gt;&gt; D-galactose). Na(+) and D-glucose transport are tightly coupled at neutral pH, but at acidic pH, ion transport is uncoupled from sugar transport. The sequence is that of Solute carrier family 5 member 4 from Sus scrofa (Pig).